The following is a 138-amino-acid chain: Putative pre-16S rRNA nuclease (138 aa).

It belongs to the YqgF nuclease family.

The protein resides in the cytoplasm. Could be a nuclease involved in processing of the 5'-end of pre-16S rRNA. This Clostridium beijerinckii (strain ATCC 51743 / NCIMB 8052) (Clostridium acetobutylicum) protein is Putative pre-16S rRNA nuclease.